The sequence spans 129 residues: Large ribosomal subunit protein uL22 (129 aa).

Belongs to the universal ribosomal protein uL22 family. Part of the 50S ribosomal subunit.

In terms of biological role, this protein binds specifically to 23S rRNA; its binding is stimulated by other ribosomal proteins, e.g. L4, L17, and L20. It is important during the early stages of 50S assembly. It makes multiple contacts with different domains of the 23S rRNA in the assembled 50S subunit and ribosome. Functionally, the globular domain of the protein is located near the polypeptide exit tunnel on the outside of the subunit, while an extended beta-hairpin is found that lines the wall of the exit tunnel in the center of the 70S ribosome. This Prochlorococcus marinus (strain MIT 9211) protein is Large ribosomal subunit protein uL22.